The primary structure comprises 572 residues: Myb-like protein Y (572 aa).

Residues 196–211 (QSQSQLPTATNNNNKQ) show a composition bias toward polar residues. The tract at residues 196 to 283 (QSQSQLPTAT…NNNNNNNNNE (88 aa)) is disordered. Low complexity-rich tracts occupy residues 222 to 237 (TATATATTTATTTTTT) and 260 to 281 (NDNNNNTNNNNNNNNNNNNNNN). Residues 311 to 360 (PWTVEDQKKLEDALTKYPPSRFSSVSRWQMVSKELGISPKAVALRYNQML) form the Myb-like domain. Residues 367 to 456 (KPSLQQQQQQ…TTVTPNMTTP (90 aa)) form a disordered region. 2 stretches are compositionally biased toward low complexity: residues 371–392 (QQQQQQQQQQQQQPTTTTTTTT) and 414–425 (SSFSSPSSSSKE). Positions 426-435 (SPNKKEKTTH) are enriched in basic and acidic residues. Positions 436-455 (DTTTTTNTATTTTVTPNMTT) are enriched in low complexity.

This chain is Myb-like protein Y (mybY), found in Dictyostelium discoideum (Social amoeba).